We begin with the raw amino-acid sequence, 98 residues long: uncharacterized protein (98 aa).

The protein belongs to the CFAP97 family. Expressed in a number of tissues including brain, thymus, lung, heart, liver, spleen, kidney and testis.

This is an uncharacterized protein from Mus musculus (Mouse).